The following is a 576-amino-acid chain: 2-isopropylmalate synthase (576 aa).

In terms of domain architecture, Pyruvate carboxyltransferase spans 31 to 305; that stretch reads PIWMSTDLRD…DPGLDFSHVN (275 aa). Residues Asp-40, His-244, His-246, and Asn-280 each contribute to the Mg(2+) site. Residues 437–576 are regulatory domain; it reads ADGPIGYVSH…RGMAPSMELA (140 aa).

Belongs to the alpha-IPM synthase/homocitrate synthase family. LeuA type 2 subfamily. In terms of assembly, homodimer. The cofactor is Mg(2+).

It is found in the cytoplasm. The catalysed reaction is 3-methyl-2-oxobutanoate + acetyl-CoA + H2O = (2S)-2-isopropylmalate + CoA + H(+). The protein operates within amino-acid biosynthesis; L-leucine biosynthesis; L-leucine from 3-methyl-2-oxobutanoate: step 1/4. In terms of biological role, catalyzes the condensation of the acetyl group of acetyl-CoA with 3-methyl-2-oxobutanoate (2-ketoisovalerate) to form 3-carboxy-3-hydroxy-4-methylpentanoate (2-isopropylmalate). In Ralstonia nicotianae (strain ATCC BAA-1114 / GMI1000) (Ralstonia solanacearum), this protein is 2-isopropylmalate synthase.